A 315-amino-acid chain; its full sequence is MSLVEKNTASEDAFALSEATARDYLVLLKPRVMSLVVFTGLVGLVLAPGHMNPVLAVISILCIAVGAGASGALNMWYDADIDAVMKRTRKRPIPAGIIAPNQVLAFGLTLSAFSVMTLGLMVNWLAAALLAFTIFFYAVIYTMWLKRSTPQNIVIGGAAGAFPPMIGWAAATGEITWDSLVLFMIIFLWTPPHFWALSLFTTNDYEAARIPMMPNVKGELSTRRQALFYAVLMAPVGVLPWVMGFAGMFYGVVSTLLGLAFVYYAWRLWAADSQLQMLAAARKLFRFSLLYLAGIFAVLLFEALTFKLLAAFGVF.

A run of 9 helical transmembrane segments spans residues 32–52 (VMSL…GHMN), 53–73 (PVLA…SGAL), 93–113 (IPAG…LSAF), 120–140 (LMVN…YAVI), 153–173 (IVIG…AATG), 180–200 (LVLF…LSLF), 226–246 (ALFY…MGFA), 249–269 (FYGV…WRLW), and 295–315 (IFAV…FGVF).

Belongs to the UbiA prenyltransferase family. Protoheme IX farnesyltransferase subfamily.

The protein localises to the cell inner membrane. The enzyme catalyses heme b + (2E,6E)-farnesyl diphosphate + H2O = Fe(II)-heme o + diphosphate. The protein operates within porphyrin-containing compound metabolism; heme O biosynthesis; heme O from protoheme: step 1/1. In terms of biological role, converts heme B (protoheme IX) to heme O by substitution of the vinyl group on carbon 2 of heme B porphyrin ring with a hydroxyethyl farnesyl side group. This is Protoheme IX farnesyltransferase from Brucella suis (strain ATCC 23445 / NCTC 10510).